The sequence spans 333 residues: Adenosine deaminase (333 aa).

Residues H12 and H14 each coordinate Zn(2+). Positions 14, 16, and 170 each coordinate substrate. A Zn(2+)-binding site is contributed by H197. The active-site Proton donor is E200. Residue D278 coordinates Zn(2+). D279 is a binding site for substrate.

Belongs to the metallo-dependent hydrolases superfamily. Adenosine and AMP deaminases family. Adenosine deaminase subfamily. Zn(2+) is required as a cofactor.

The catalysed reaction is adenosine + H2O + H(+) = inosine + NH4(+). It carries out the reaction 2'-deoxyadenosine + H2O + H(+) = 2'-deoxyinosine + NH4(+). Functionally, catalyzes the hydrolytic deamination of adenosine and 2-deoxyadenosine. The polypeptide is Adenosine deaminase (Aliivibrio fischeri (strain MJ11) (Vibrio fischeri)).